A 122-amino-acid polypeptide reads, in one-letter code: Large ribosomal subunit protein uL18 (122 aa).

It belongs to the universal ribosomal protein uL18 family. As to quaternary structure, part of the 50S ribosomal subunit; part of the 5S rRNA/L5/L18/L25 subcomplex. Contacts the 5S and 23S rRNAs.

Functionally, this is one of the proteins that bind and probably mediate the attachment of the 5S RNA into the large ribosomal subunit, where it forms part of the central protuberance. The sequence is that of Large ribosomal subunit protein uL18 from Syntrophotalea carbinolica (strain DSM 2380 / NBRC 103641 / GraBd1) (Pelobacter carbinolicus).